The primary structure comprises 528 residues: Tyrosine--tRNA ligase, cytoplasmic (528 aa).

Tyrosine 39 contacts L-tyrosine. The 'HIGH' region motif lies at 44–52; it reads TTGKPHVAY. L-tyrosine-binding residues include tyrosine 166, glutamine 170, aspartate 173, and glutamine 188. Residues 222–226 carry the 'KMSKS' region motif; the sequence is KMSSS. Positions 242–247 match the Nuclear localization signal motif; the sequence is KKKLKK. Residues 335–364 are disordered; sequence KLSNDAYPGASKQKTVPKGSTKNSGPEEID. Over residues 346 to 358 the composition is skewed to polar residues; that stretch reads KQKTVPKGSTKNS. One can recognise a tRNA-binding domain in the interval 364–468; the sequence is DPSLLDLRVG…TGSAPGERIY (105 aa).

This sequence belongs to the class-I aminoacyl-tRNA synthetase family. In terms of assembly, homodimer.

The protein resides in the cytoplasm. The protein localises to the nucleus. The catalysed reaction is tRNA(Tyr) + L-tyrosine + ATP = L-tyrosyl-tRNA(Tyr) + AMP + diphosphate + H(+). Catalyzes the attachment of tyrosine to tRNA(Tyr) in a two-step reaction: tyrosine is first activated by ATP to form Tyr-AMP and then transferred to the acceptor end of tRNA(Tyr). The protein is Tyrosine--tRNA ligase, cytoplasmic (yars1) of Xenopus tropicalis (Western clawed frog).